Reading from the N-terminus, the 78-residue chain is Acyl carrier protein (78 aa).

The Carrier domain maps to 2–77 (SDTAERIKKI…DAVSYIDEHK (76 aa)). An O-(pantetheine 4'-phosphoryl)serine modification is found at S37.

It belongs to the acyl carrier protein (ACP) family. Post-translationally, 4'-phosphopantetheine is transferred from CoA to a specific serine of apo-ACP by AcpS. This modification is essential for activity because fatty acids are bound in thioester linkage to the sulfhydryl of the prosthetic group.

The protein localises to the cytoplasm. It participates in lipid metabolism; fatty acid biosynthesis. In terms of biological role, carrier of the growing fatty acid chain in fatty acid biosynthesis. The sequence is that of Acyl carrier protein from Zymomonas mobilis subsp. mobilis (strain ATCC 31821 / ZM4 / CP4).